The sequence spans 269 residues: Protein OPG079 (269 aa).

Belongs to the orthopoxvirus OPG079 family. As to quaternary structure, homoomultimer (Potential). Interacts with the small subunit of ribonucleotide reductase. Interacts with host FAM111A; this interaction protomtes OPG079 degradation through autophagy.

It is found in the host cytoplasm. Plays an essential role in viral DNA replication. Binds to ssDNA with high affinity and localizes to cytoplasmic factories where nascent viral genomes accumulate. May disrupt loops, hairpins and other secondary structures present on ssDNA to reduce and eliminate pausing of viral DNA polymerase at specific sites during elongation. This is Protein OPG079 (OPG079) from Bos taurus (Bovine).